Consider the following 58-residue polypeptide: Light-harvesting protein B-875 alpha chain (58 aa).

Over 1-15 (MSKFYKIWMIFDPRR) the chain is Cytoplasmic. Residues 16–36 (VFVAQGVFLFLLAVMIHLILL) traverse the membrane as a helical segment. Histidine 32 provides a ligand contact to a bacteriochlorophyll. Residues 37 to 58 (STPSYNWLEISAAKYNRVAVAE) lie on the Periplasmic side of the membrane.

Belongs to the antenna complex alpha subunit family. In terms of assembly, the core complex is formed by different alpha and beta chains, binding bacteriochlorophyll molecules, and arranged most probably in tetrameric structures disposed around the reaction center. The non-pigmented gamma chains may constitute additional components.

It localises to the cell inner membrane. Its function is as follows. Antenna complexes are light-harvesting systems, which transfer the excitation energy to the reaction centers. The chain is Light-harvesting protein B-875 alpha chain (pufA) from Cereibacter sphaeroides (strain ATCC 17023 / DSM 158 / JCM 6121 / CCUG 31486 / LMG 2827 / NBRC 12203 / NCIMB 8253 / ATH 2.4.1.) (Rhodobacter sphaeroides).